The sequence spans 845 residues: Envelope glycoprotein gp160 (845 aa).

The signal sequence occupies residues 1–28; it reads METQRNYPSLWRWGTLILGMLLICSAAQ. At 29 to 673 the chain is on the extracellular side; the sequence is NLWVTVYYGV…ISHWLWYIKI (645 aa). A disulfide bridge connects residues Cys50 and Cys70. Asn84, Asn126, Asn132, Asn133, Asn136, Asn149, Asn153, Asn179, Asn180, Asn190, Asn223, Asn227, Asn234, Asn255, Asn269, Asn286, Asn294, Asn324, Asn331, and Asn347 each carry an N-linked (GlcNAc...) asparagine; by host glycan. 5 cysteine pairs are disulfide-bonded: Cys115–Cys198, Cys122–Cys189, Cys127–Cys150, Cys211–Cys240, and Cys221–Cys232. Positions 127–149 are V1; sequence CTNVRNNTSNSTSSMEAGGELTN. Positions 150–189 are V2; the sequence is CSFNVTTVLRDKQQKVHALFYRLDVVPIDNNSTQYRLINC. A V3 region spans residues 289 to 322; sequence CTRPNNNTRTSIHLGPGRAFYATGDIIGDIRQAH. A disulfide bridge links Cys289 with Cys323. A CD4-binding loop region spans residues 355-365; that stretch reads NSGGDMEVRTH. Cystine bridges form between Cys369–Cys434 and Cys376–Cys407. The tract at residues 376-407 is V4; sequence CNTSGLFNSSWEMHTNYTSNDTKGNENITLPC. Residues Asn377, Asn383, Asn391, Asn395, Asn402, Asn437, Asn449, and Asn454 are each glycosylated (N-linked (GlcNAc...) asparagine; by host). 2 V5 regions span residues 450–460 and 452–460; these read ASAENYTFRPG and AENYTFRPG. The fusion peptide stretch occupies residues 501-521; the sequence is AVGMGASFLGFLGAAGSTMGA. The segment at 563–581 is immunosuppression; the sequence is KQLQARVLAVERYLRDQQL. Residues Cys587 and Cys593 are joined by a disulfide bond. N-linked (GlcNAc...) asparagine; by host glycosylation is found at Asn600, Asn605, Asn614, and Asn626. Residues 622-656 are a coiled coil; it reads KQISNYTEEIYRLLEVSQTQQEKNEQDLLALDKWA. Residues 651–672 are MPER; binding to GalCer; sequence ALDKWASLWTWFDISHWLWYIK. The chain crosses the membrane as a helical span at residues 674 to 694; that stretch reads FIMIVGGLIGLRIIFAVLSIV. Over 695 to 845 the chain is Cytoplasmic; that stretch reads NRVRQGYSPL…IRQGFERSLL (151 aa). The YXXL motif; contains endocytosis signal signature appears at 701-704; that stretch reads YSPL. The interval 708 to 731 is disordered; the sequence is TLVPNPRGPDRPEGTEEGGGEQDR. Positions 844-845 match the Di-leucine internalization motif motif; that stretch reads LL.

It belongs to the HIV-1 env protein family. The mature envelope protein (Env) consists of a homotrimer of non-covalently associated gp120-gp41 heterodimers. The resulting complex protrudes from the virus surface as a spike. There seems to be as few as 10 spikes on the average virion. Interacts with host CD4, CCR5 and CXCR4. Gp120 also interacts with the C-type lectins CD209/DC-SIGN and CLEC4M/DC-SIGNR (collectively referred to as DC-SIGN(R)). Gp120 and gp41 interact with GalCer. Gp120 interacts with host ITGA4/ITGB7 complex; on CD4+ T-cells, this interaction results in rapid activation of integrin ITGAL/LFA-1, which facilitates efficient cell-to-cell spreading of HIV-1. Gp120 interacts with cell-associated heparan sulfate; this interaction increases virus infectivity on permissive cells and may be involved in infection of CD4- cells. In terms of assembly, the mature envelope protein (Env) consists of a homotrimer of non-covalently associated gp120-gp41 heterodimers. The resulting complex protrudes from the virus surface as a spike. There seems to be as few as 10 spikes on the average virion. Highly glycosylated by host. The high number of glycan on the protein is reffered to as 'glycan shield' because it contributes to hide protein sequence from adaptive immune system. In terms of processing, palmitoylation of the transmembrane protein and of Env polyprotein (prior to its proteolytic cleavage) is essential for their association with host cell membrane lipid rafts. Palmitoylation is therefore required for envelope trafficking to classical lipid rafts, but not for viral replication. Post-translationally, specific enzymatic cleavages in vivo yield mature proteins. Envelope glycoproteins are synthesized as an inactive precursor that is heavily N-glycosylated and processed likely by host cell furin in the Golgi to yield the mature SU and TM proteins. The cleavage site between SU and TM requires the minimal sequence [KR]-X-[KR]-R. About 2 of the 9 disulfide bonds of gp41 are reduced by P4HB/PDI, following binding to CD4 receptor.

It localises to the virion membrane. It is found in the host cell membrane. The protein resides in the host endosome membrane. Its function is as follows. Oligomerizes in the host endoplasmic reticulum into predominantly trimers. In a second time, gp160 transits in the host Golgi, where glycosylation is completed. The precursor is then proteolytically cleaved in the trans-Golgi and thereby activated by cellular furin or furin-like proteases to produce gp120 and gp41. Functionally, attaches the virus to the host lymphoid cell by binding to the primary receptor CD4. This interaction induces a structural rearrangement creating a high affinity binding site for a chemokine coreceptor like CXCR4 and/or CCR5. Acts as a ligand for CD209/DC-SIGN and CLEC4M/DC-SIGNR, which are respectively found on dendritic cells (DCs), and on endothelial cells of liver sinusoids and lymph node sinuses. These interactions allow capture of viral particles at mucosal surfaces by these cells and subsequent transmission to permissive cells. HIV subverts the migration properties of dendritic cells to gain access to CD4+ T-cells in lymph nodes. Virus transmission to permissive T-cells occurs either in trans (without DCs infection, through viral capture and transmission), or in cis (following DCs productive infection, through the usual CD4-gp120 interaction), thereby inducing a robust infection. In trans infection, bound virions remain infectious over days and it is proposed that they are not degraded, but protected in non-lysosomal acidic organelles within the DCs close to the cell membrane thus contributing to the viral infectious potential during DCs' migration from the periphery to the lymphoid tissues. On arrival at lymphoid tissues, intact virions recycle back to DCs' cell surface allowing virus transmission to CD4+ T-cells. In terms of biological role, acts as a class I viral fusion protein. Under the current model, the protein has at least 3 conformational states: pre-fusion native state, pre-hairpin intermediate state, and post-fusion hairpin state. During fusion of viral and target intracellular membranes, the coiled coil regions (heptad repeats) assume a trimer-of-hairpins structure, positioning the fusion peptide in close proximity to the C-terminal region of the ectodomain. The formation of this structure appears to drive apposition and subsequent fusion of viral and target cell membranes. Complete fusion occurs in host cell endosomes and is dynamin-dependent, however some lipid transfer might occur at the plasma membrane. The virus undergoes clathrin-dependent internalization long before endosomal fusion, thus minimizing the surface exposure of conserved viral epitopes during fusion and reducing the efficacy of inhibitors targeting these epitopes. Membranes fusion leads to delivery of the nucleocapsid into the cytoplasm. This chain is Envelope glycoprotein gp160, found in Homo sapiens (Human).